A 292-amino-acid polypeptide reads, in one-letter code: MFNRIFLFLLTNVAVLMLAGVVMSVLGVNPAQMSGLLVMAAIFGFGGSFISLLLSKFMAKRSTGAQVITEPRTPTERWLLETVRRQAQAAGIGMPEVAVYDGPEINAFATGANRNNALVAVSTGLLQHMDQDEAEAVLGHEIAHVANGDMVTMALLQGVLNTFVIVLARVVGGIIDSAVSGNRDSGRGFAYYIIVFVLEMVFGMFATMIAMWFSRRREFRADAGGAQLAGRSKMIAALERLSLNHGQNTLPSQVQAFGISGGVGDGLRRLFLSHPPLTERIAALRAANGTAM.

The next 2 helical transmembrane spans lie at 5–25 and 34–54; these read IFLF…VMSV and SGLL…SLLL. Histidine 140 serves as a coordination point for Zn(2+). Glutamate 141 is an active-site residue. Histidine 144 is a binding site for Zn(2+). 2 consecutive transmembrane segments (helical) span residues 155-175 and 193-213; these read LLQG…GGII and IIVF…AMWF. Glutamate 218 serves as a coordination point for Zn(2+).

The protein belongs to the peptidase M48B family. Zn(2+) is required as a cofactor.

The protein resides in the cell inner membrane. In Xanthomonas oryzae pv. oryzae (strain MAFF 311018), this protein is Protease HtpX.